The chain runs to 394 residues: Elongation factor Tu 2 (394 aa).

Residues 10–204 (KPHVNVGTIG…ALDTYIPEPE (195 aa)) form the tr-type G domain. The G1 stretch occupies residues 19-26 (GHVDHGKT). 19 to 26 (GHVDHGKT) contributes to the GTP binding site. Residue Thr-26 participates in Mg(2+) binding. A G2 region spans residues 60–64 (GITIS). A G3 region spans residues 81 to 84 (DCPG). GTP contacts are provided by residues 81-85 (DCPGH) and 136-139 (NKCD). Residues 136-139 (NKCD) are G4. Residues 174-176 (SAL) are G5.

Belongs to the TRAFAC class translation factor GTPase superfamily. Classic translation factor GTPase family. EF-Tu/EF-1A subfamily. In terms of assembly, monomer.

The protein localises to the cytoplasm. The catalysed reaction is GTP + H2O = GDP + phosphate + H(+). In terms of biological role, GTP hydrolase that promotes the GTP-dependent binding of aminoacyl-tRNA to the A-site of ribosomes during protein biosynthesis. This chain is Elongation factor Tu 2, found in Vibrio vulnificus (strain CMCP6).